The primary structure comprises 758 residues: General transcription and DNA repair factor IIH helicase subunit XPD (758 aa).

Residues 7–285 form the Helicase ATP-binding domain; sequence DVTVYFPYDN…TDAGRLRAEY (279 aa). 42–49 is a binding site for ATP; sequence MPTGTGKT. [4Fe-4S] cluster-binding residues include Cys116, Cys134, Cys155, and Cys190. The DEAH box signature appears at 234-238; it reads DEAHN.

This sequence belongs to the helicase family. RAD3/XPD subfamily. Component of the 7-subunit TFIIH core complex composed of XPB, XPD, TFB1/GTF2H1, GTF2H2/P44, TFB4/GTF2H3, TFB2/GTF2H4 and TFB5/GTF2H5, which is active in NER. The core complex associates with the 3-subunit CDK-activating kinase (CAK) module composed of CYCH1/cyclin H1, CDKD and MAT1/At4g30820 to form the 10-subunit holoenzyme (holo-TFIIH) active in transcription. Interacts with GTF2H2/p44. It depends on [4Fe-4S] cluster as a cofactor. In terms of tissue distribution, expressed at low levels in all tissues.

The protein localises to the nucleus. The catalysed reaction is Couples ATP hydrolysis with the unwinding of duplex DNA at the replication fork by translocating in the 5'-3' direction. This creates two antiparallel DNA single strands (ssDNA). The leading ssDNA polymer is the template for DNA polymerase III holoenzyme which synthesizes a continuous strand.. It catalyses the reaction ATP + H2O = ADP + phosphate + H(+). Functionally, ATP-dependent 5'-3' DNA helicase, component of the general transcription and DNA repair factor IIH (TFIIH) core complex, which is involved in general and transcription-coupled nucleotide excision repair (NER) of damaged DNA and, when complexed to CDK-activating kinase (CAK), involved in transcription by RNA polymerase II. In NER, TFIIH acts by opening DNA around the lesion to allow the excision of the damaged oligonucleotide and its replacement by a new DNA fragment. The ATP-dependent helicase activity of XPD is required for DNA opening. In transcription, TFIIH has an essential role in transcription initiation. When the pre-initiation complex (PIC) has been established, TFIIH is required for promoter opening and promoter escape. Phosphorylation of the C-terminal tail (CTD) of the largest subunit of RNA polymerase II by the kinase module CAK controls the initiation of transcription. XPD acts by forming a bridge between CAK and the core-TFIIH complex. Essential during plant growth. May negatively regulate a common response program mediated by UV damage and heat stress, that leads to tissue death and reduced chloroplast function. This chain is General transcription and DNA repair factor IIH helicase subunit XPD, found in Arabidopsis thaliana (Mouse-ear cress).